The following is a 106-amino-acid chain: uncharacterized protein (106 aa).

The tract at residues 28-68 is disordered; sequence SSANEPKKLPNKKLVSTKSHTQVNREKSKNKDTYEDYSDSN. Basic and acidic residues predominate over residues 50–61; sequence VNREKSKNKDTY.

This is an uncharacterized protein from Acanthamoeba polyphaga (Amoeba).